We begin with the raw amino-acid sequence, 358 residues long: sn-glycerol-3-phosphate import ATP-binding protein UgpC (358 aa).

One can recognise an ABC transporter domain in the interval 4 to 235; that stretch reads VELKQVRKTY…PATLFVASFI (232 aa). 37–44 is an ATP binding site; it reads GPSGCGKS.

The protein belongs to the ABC transporter superfamily. sn-glycerol-3-phosphate importer (TC 3.A.1.1.3) family. As to quaternary structure, the complex is composed of two ATP-binding proteins (UgpC), two transmembrane proteins (UgpA and UgpE) and a solute-binding protein (UgpB).

It localises to the cell inner membrane. It catalyses the reaction sn-glycerol 3-phosphate(out) + ATP + H2O = sn-glycerol 3-phosphate(in) + ADP + phosphate + H(+). Functionally, part of the ABC transporter complex UgpBAEC involved in sn-glycerol-3-phosphate (G3P) import. Responsible for energy coupling to the transport system. This Roseobacter denitrificans (strain ATCC 33942 / OCh 114) (Erythrobacter sp. (strain OCh 114)) protein is sn-glycerol-3-phosphate import ATP-binding protein UgpC.